We begin with the raw amino-acid sequence, 122 residues long: uncharacterized protein (122 aa).

The signal sequence occupies residues 1–18; sequence MYSMAFLASSGLVANSSA. N15 carries an N-linked (GlcNAc...) asparagine glycan.

This is an uncharacterized protein from Saccharomyces cerevisiae (strain ATCC 204508 / S288c) (Baker's yeast).